We begin with the raw amino-acid sequence, 421 residues long: Hydrolyase poxO (421 aa).

Residue S239 is the Nucleophile of the active site.

It belongs to the AB hydrolase superfamily. FUS2 hydrolase family. Homodimer.

It functions in the pathway secondary metabolite biosynthesis. In terms of biological role, hydrolyase; part of the gene cluster that mediates the biosynthesis of oxaleimides, cytotoxic compounds containing an unusual disubstituted succinimide moiety. The first step of the pathway is provided by the HR-PKS poxF that serves in a new mode of collaborative biosynthesis with the PKS-NRPS poxE, by providing the olefin containing amino acid substrate via the synthesis of an ACP-bound dec-4-enoate. The cytochrome P450 monooxygenase poxM-catalyzed oxidation at the alpha-position creates the enzyme-bound 2-hydroxydec-4-enoyl-ACP thioester, which may be prone to spontaneous hydrolysis to yield 2-hydroxydec-4-enoic acid due to increased electrophilicity of the carbonyl. 2-hydroxydec-4-enoic acid can then be further oxidized by poxM to yield the alpha-ketoacid 2-oxodec-4-enoicacid, which is reductively aminated by the aminotransferase poxL to yield (S,E)-2-aminodec-4-enoic acid. The Hybrid PKS-NRPS synthetase poxE then performs condensation between the octaketide product of its PKS modules and the amino group of (S,E)-2-aminodec-4-enoic acid which is activated and incorporated by the adenylation domain. The resulting aminoacyl product can be cyclized by the Diels-Alderase PoxQ and reductively released by the reductive (R) domain of poxE to yield an aldehyde intermediate. The released aldehyde is then substrate for a Knoevenagel condensation by the hydrolyase poxO followed by an oxidation at the 5-position of the pyrrolidone ring. The presence of the olefin from the amino acid building block allows for migration of the substituted allyl group to occur. This allylic transposition reaction takes place in a conjugate addition, semipinacol-like fashion to yield a succinimide intermediate. Iterative two-electron oxidations of the C7 methyl of the succinimide intermediate to the carboxylic acid can be catalyzed by one of two remaining cytochrome P450 monooxygenasess poxC or poxD to yield oxaleimide A. Subsequent oxidation yields the maleimide scaffold oxaleimide I. Both oxaleimide A and oxaleimide I can undergo oxidative modifications in the decalin ring to yield the series of products oxaleimides B to H. This Penicillium oxalicum protein is Hydrolyase poxO.